The chain runs to 323 residues: COP9 signalosome complex subunit 6 (323 aa).

An MPN domain is found at 37 to 170 (VALHPLVILN…VSVFESVIDI (134 aa)).

The protein belongs to the peptidase M67A family. CSN6 subfamily. In terms of assembly, component of the CSN complex, composed of COPS1/GPS1, COPS2, COPS3, COPS4, COPS5, COPS6, COPS7 (COPS7A or COPS7B), COPS8 and COPS9. In the complex, it probably interacts directly with COPS2, COPS4, COPS5, COPS7 (COPS7A or COPS7B) and COPS9. Interacts with the translation initiation factor EIF3S6. Interacts weakly with RBX1. Directly interacts with COP1 and 14-3-3 protein sigma/SFN. Interacts with ERCC6.

The protein resides in the cytoplasm. It is found in the nucleus. Component of the COP9 signalosome complex (CSN), a complex involved in various cellular and developmental processes. The CSN complex is an essential regulator of the ubiquitin (Ubl) conjugation pathway by mediating the deneddylation of the cullin subunits of SCF-type E3 ligase complexes, leading to decrease the Ubl ligase activity of SCF-type complexes such as SCF, CSA or DDB2. The complex is also involved in phosphorylation of p53/TP53, c-jun/JUN, IkappaBalpha/NFKBIA, ITPK1 and IRF8, possibly via its association with CK2 and PKD kinases. CSN-dependent phosphorylation of TP53 and JUN promotes and protects degradation by the Ubl system, respectively. Has some glucocorticoid receptor-responsive activity. Stabilizes COP1 through reducing COP1 auto-ubiquitination and decelerating COP1 turnover rate, hence regulates the ubiquitination of COP1 targets, including SFN. This Sus scrofa (Pig) protein is COP9 signalosome complex subunit 6 (COPS6).